The primary structure comprises 160 residues: Phosphopantetheine adenylyltransferase (160 aa).

Thr9 contacts substrate. Residues 9-10 (TF) and His17 each bind ATP. 3 residues coordinate substrate: Lys41, Leu73, and Arg87. Residues 88–90 (GLR), Glu98, and 123–129 (YSFLSSS) each bind ATP.

It belongs to the bacterial CoaD family. Homohexamer. Requires Mg(2+) as cofactor.

It localises to the cytoplasm. The catalysed reaction is (R)-4'-phosphopantetheine + ATP + H(+) = 3'-dephospho-CoA + diphosphate. It functions in the pathway cofactor biosynthesis; coenzyme A biosynthesis; CoA from (R)-pantothenate: step 4/5. Functionally, reversibly transfers an adenylyl group from ATP to 4'-phosphopantetheine, yielding dephospho-CoA (dPCoA) and pyrophosphate. The polypeptide is Phosphopantetheine adenylyltransferase (Moorella thermoacetica (strain ATCC 39073 / JCM 9320)).